Consider the following 518-residue polypeptide: Arrestin-related trafficking adapter 10 (518 aa).

A Glycyl lysine isopeptide (Lys-Gly) (interchain with G-Cter in ubiquitin) cross-link involves residue Lys-118.

It belongs to the ART10 family. Interacts with RSP5. Post-translationally, ubiquitinated by RSP5.

It localises to the cytoplasm. Its function is as follows. May regulate endocytosis by recruiting RSP5 ubiquitin ligase activity to specific plasma membrane proteins in response to extracellular stimuli. This Saccharomyces cerevisiae (strain YJM789) (Baker's yeast) protein is Arrestin-related trafficking adapter 10 (ART10).